The primary structure comprises 300 residues: Protein Bel-1 (300 aa).

Disordered stretches follow at residues 1–20, 26–50, and 185–237; these read MDSYQEEEPVASTSGLQDLQ, VGPENAGEGDLVIAEEPEENPRRPR, and KPST…GDTV. A compositionally biased stretch (polar residues) spans 11–20; it reads ASTSGLQDLQ. A DNA-binding region spans residues 89–200; sequence SKSICKRLIL…PEGPKPRRRH (112 aa). The segment covering 201–210 has biased composition (basic and acidic residues); that stretch reads DPVLRCDMFE. Positions 211 to 222 are enriched in basic residues; the sequence is KHHKPRPKRSRK. Positions 214–223 match the Nuclear localization signal motif; sequence KPRPKRSRKR. Residues 224–300 are transactivation domain; that stretch reads SIDHESCASS…PSGSGEHSVL (77 aa).

Homodimer or homomultimer. Forms complexes with the host nuclear factors NFIA, NFIB, NFIC or NFIX.

Its subcellular location is the host nucleus. Functionally, transcriptional transactivator that activates the viral internal promoter (IP), thereby enhancing its own expression. This transactivation is repressed by nuclear factor I. Also transactivates the long terminal repeat (LTR) promoter, thereby inducing structural gene expression, initiating the late phase of infection. It is therefore a key regulator of viral gene expression. It directly binds to and activates DNA target sites of viral promoters and those of distinct cellular genes. Required for viral replication. In Pan troglodytes (Chimpanzee), this protein is Protein Bel-1 (bel1).